The sequence spans 367 residues: Cis-3-hydroxy-L-proline dehydratase (367 aa).

Residue K165 is the Proton donor/acceptor of the active site. Mg(2+)-binding residues include D193, E218, and D241. K265 functions as the Proton donor/acceptor in the catalytic mechanism.

It belongs to the mandelate racemase/muconate lactonizing enzyme family. Mg(2+) is required as a cofactor.

The catalysed reaction is cis-3-hydroxy-L-proline = 1-pyrroline-2-carboxylate + H2O. In terms of biological role, catalyzes the dehydration of cis-3-hydroxy-L-proline (c3LHyp) to Delta(1)-pyrroline-2-carboxylate (Pyr2C). Is likely involved in a degradation pathway that converts c3LHyp to L-proline, which allows L.aggregata to grow on c3LHyp as a sole carbon source. Also catalyzes the epimerization of c3LHyp to trans-3-hydroxy-D-proline (t3DHyp), a competing reaction occurring from the same enolate anion intermediate. L-proline, t3LHyp, t4LHyp, c4DHyp and their methylated derivatives are not substrates. This is Cis-3-hydroxy-L-proline dehydratase from Roseibium aggregatum (strain ATCC 25650 / DSM 13394 / JCM 20685 / NBRC 16684 / NCIMB 2208 / IAM 12614 / B1) (Stappia aggregata).